Consider the following 569-residue polypeptide: F-box/WD repeat-containing protein 5 (569 aa).

Positions 3-49 constitute an F-box domain; sequence EGGMPLLPDSLVYQIFLSLGPADVLAAGLVCRQWQAVSRDEFLWREQ. The stretch at 90 to 129 is one WD 1 repeat; it reads EHTDQVLHLSFSHSGYQFASCSKDCTVKIWNNDLTISLLH. Phosphoserine; by PLK4 is present on Ser151. A D-box motif is present at residues 308-316; it reads RRVFDSVLD. WD repeat units lie at residues 470–509 and 511–551; these read TPND…CLAK and RHED…RVLQ.

The protein belongs to the FBXW5 family. Part of the SCF (SKP1-CUL1-F-box) E3 ubiquitin-protein ligase complex SCF(FBXW5) composed of CUL1, SKP1, RBX1 and FBXW5. Component of the DCX(FBXW5) E3 ubiquitin ligase complex, at least composed of (CUL4A or CUL4B), DDB1, FBXW5 and RBX1. Interacts with CDC20, EPS8, TSC1, TSC2 and SASS6. Interacts with TNFAIP8L1; TNFAIP8L1 competes with TSC2 to bind FBXW5 increasing TSC2 stability by preventing its ubiquitination. In terms of processing, phosphorylated at Ser-151 by PLK4 during the G1/S transition, leading to inhibit its ability to ubiquitinate SASS6. Post-translationally, ubiquitinated and degraded by the APC/C complex during mitosis and G1 phase.

It localises to the cytoplasm. The protein operates within protein modification; protein ubiquitination. In terms of biological role, substrate recognition component of both SCF (SKP1-CUL1-F-box protein) and DCX (DDB1-CUL4-X-box) E3 ubiquitin-protein ligase complexes. Substrate recognition component of the SCF(FBXW5) E3 ubiquitin-protein ligase complex which mediates the ubiquitination and subsequent proteasomal degradation of SASS6 during S phase, leading to prevent centriole reduplication. The SCF(FBXW5) complex also mediates ubiquitination and degradation of actin-regulator EPS8 during G2 phase, leading to the transient degradation of EPS8 and subsequent cell shape changes required to allow mitotic progression. Substrate-specific adapter of the DCX(FBXW5) E3 ubiquitin-protein ligase complex which mediates the polyubiquitination and subsequent degradation of TSC2. May also act as a negative regulator of MAP3K7/TAK1 signaling in the interleukin-1B (IL1B) signaling pathway. This is F-box/WD repeat-containing protein 5 (Fbxw5) from Rattus norvegicus (Rat).